The primary structure comprises 341 residues: Probable membrane-associated kinase regulator 1 (341 aa).

Disordered stretches follow at residues 1 to 29 (MRRQPPRPRNSPPQSHSSPSSSSSEFEFN), 67 to 122 (TLGS…SSRP), 158 to 185 (PKTNLHHHSSSSSTATTAAAPSSVKRMS), 206 to 230 (LSPKQSSNIKTESSSSLKDSGNNIR), and 288 to 310 (RGGFPVHQGSCSSSSSNNNSVSS). Low complexity-rich tracts occupy residues 12–29 (PPQSHSSPSSSSSEFEFN), 67–108 (TLGS…SFPL), and 167–180 (SSSSTATTAAAPSS). The span at 208 to 230 (PKQSSNIKTESSSSLKDSGNNIR) shows a compositional bias: polar residues. Residues 297-310 (SCSSSSSNNNSVSS) show a composition bias toward low complexity.

As to quaternary structure, a C-terminus-derived peptide binds BRI1 in vitro.

Its subcellular location is the cell membrane. In terms of biological role, may negatively regulate brassinosteroid signaling. In Arabidopsis thaliana (Mouse-ear cress), this protein is Probable membrane-associated kinase regulator 1 (MAKR1).